The following is a 491-amino-acid chain: Glutamyl-tRNA(Gln) amidotransferase subunit A (491 aa).

Active-site charge relay system residues include lysine 79 and serine 154. The Acyl-ester intermediate role is filled by serine 178.

Belongs to the amidase family. GatA subfamily. As to quaternary structure, heterotrimer of A, B and C subunits.

The catalysed reaction is L-glutamyl-tRNA(Gln) + L-glutamine + ATP + H2O = L-glutaminyl-tRNA(Gln) + L-glutamate + ADP + phosphate + H(+). In terms of biological role, allows the formation of correctly charged Gln-tRNA(Gln) through the transamidation of misacylated Glu-tRNA(Gln) in organisms which lack glutaminyl-tRNA synthetase. The reaction takes place in the presence of glutamine and ATP through an activated gamma-phospho-Glu-tRNA(Gln). This Alkaliphilus metalliredigens (strain QYMF) protein is Glutamyl-tRNA(Gln) amidotransferase subunit A.